Consider the following 300-residue polypeptide: Transcription initiation factor IIB (300 aa).

The TFIIB-type zinc finger occupies 2–34; it reads NKQKVCPACESAELIYDPERGEIVCAKCGYVIE. Cysteine 7, cysteine 10, cysteine 26, and cysteine 29 together coordinate Zn(2+). 2 repeat units span residues 114–197 and 210–291.

This sequence belongs to the TFIIB family.

In terms of biological role, stabilizes TBP binding to an archaeal box-A promoter. Also responsible for recruiting RNA polymerase II to the pre-initiation complex (DNA-TBP-TFIIB). The polypeptide is Transcription initiation factor IIB (Pyrococcus furiosus (strain ATCC 43587 / DSM 3638 / JCM 8422 / Vc1)).